The primary structure comprises 538 residues: Putative amidase kk1C (538 aa).

The interval 1-32 is disordered; the sequence is MTEPTWKTVASEKQQQRESKIPSEWQIPKSSH. Residues lysine 134 and serine 209 each act as charge relay system in the active site. Serine 233 (acyl-ester intermediate) is an active-site residue.

It belongs to the amidase family.

It catalyses the reaction a monocarboxylic acid amide + H2O = a monocarboxylate + NH4(+). Its pathway is secondary metabolite biosynthesis. In terms of biological role, putative amidase; part of the gene cluster that mediates the biosynthesis of KK-1, a novel cyclic depsipeptide with 10 residues which is a promising active compound with high activity against many plant pathogens, especially Botrytis cinerea. The role of kk1C in KK-1 biosynthesis has still to be determined. The nonribosomal peptide synthetase (NRPS) kk1B catalyzes the elongation and cyclization of the decapeptide chain composed of 1 D-lactic acid residue (D-Lac), 1 pipecolic acid residue (Pip), 1 aspartic acid residue (Asp), 1 isoleucine residue (Ile), 1 glycine residue (Gly), 1 tyrosine residue (Tyr) and 4 valine residues (Val). The Asp, Ile and 3 Val residues are N-methylated by the 5 methyltransferase domains from the NRPS (found in modules 3, 5, 6, 7 and 9), whereas the Tyr residue is O-methylated by the cluster encoded O-methyltransferase kk1A. The thioesterase kk1J is likely to be involved in the corrective mechanism of peptide chain synthesis. The D-lactate dehydrogenase kk1H is involved in the synthesis of D-lactic acid from pyruvic acid, which is recognized by the A domain of the first kk1B module. The pyrroline-5-carboxylate reductase kk1I is involved in the synthesis of the L-pipecolic acid residue of KK-1 from delta-1-pyrroline-5-carboxylate (P5C), a metabolic intermediate of lysine. It is still unclear how kk1C and kk1D are involved in the production of KK-1. The protein is Putative amidase kk1C of Curvularia clavata.